A 468-amino-acid chain; its full sequence is ATP synthase subunit beta (468 aa).

148 to 155 (GGAGVGKT) contacts ATP.

Belongs to the ATPase alpha/beta chains family. F-type ATPases have 2 components, CF(1) - the catalytic core - and CF(0) - the membrane proton channel. CF(1) has five subunits: alpha(3), beta(3), gamma(1), delta(1), epsilon(1). CF(0) has three main subunits: a(1), b(2) and c(9-12). The alpha and beta chains form an alternating ring which encloses part of the gamma chain. CF(1) is attached to CF(0) by a central stalk formed by the gamma and epsilon chains, while a peripheral stalk is formed by the delta and b chains.

The protein resides in the cell inner membrane. It catalyses the reaction ATP + H2O + 4 H(+)(in) = ADP + phosphate + 5 H(+)(out). Functionally, produces ATP from ADP in the presence of a proton gradient across the membrane. The catalytic sites are hosted primarily by the beta subunits. This chain is ATP synthase subunit beta, found in Xanthomonas axonopodis pv. citri (strain 306).